A 221-amino-acid chain; its full sequence is MSETVGNGENFPAVAARDDRLVWVDLEMTGLDLERHVIVEVAALVTDANLNILGEGVDLVVHATDEELARMDDFVTRMHDSSGLTPLIRASTVSLKDAEDAVLALIEEHCDPAHPAPLAGNSIATDRAFIREQMPRLDAALHYRMVDVSSVKELARRWCPRVYYKQPTKGLAHRALADIVESIRELDYYRRSFFVADPGPTSAQCEADAETSVARFAHYLE.

Positions Leu-21–Leu-186 constitute an Exonuclease domain. Residue Tyr-143 is part of the active site.

Belongs to the oligoribonuclease family.

It is found in the cytoplasm. In terms of biological role, 3'-to-5' exoribonuclease specific for small oligoribonucleotides. This is Oligoribonuclease from Corynebacterium efficiens (strain DSM 44549 / YS-314 / AJ 12310 / JCM 11189 / NBRC 100395).